The following is a 220-amino-acid chain: MGLEEKLPNGILLANVEKLVNWTRKTSVWPAAFGLACCAIEMMTVGGSRYDIARFGMERFSATPRQADLMVVAGRVTNKMAPVLRQVYDQMPEPRWVIAMGVCASSGGMFNNYAVVQGVDHVVPVDMYLPGCPPRPEMLLDAILKLHAKIMDEPINAKRAALRLESGARTELVPSSERYAPKNRSQRKLAERQQAAQRREMGAEKPLGALEERAELNAGR.

[4Fe-4S] cluster-binding residues include cysteine 37, cysteine 38, cysteine 103, and cysteine 132. Residues 174–220 are disordered; the sequence is PSSERYAPKNRSQRKLAERQQAAQRREMGAEKPLGALEERAELNAGR. The span at 210 to 220 shows a compositional bias: basic and acidic residues; sequence LEERAELNAGR.

It belongs to the complex I 20 kDa subunit family. As to quaternary structure, NDH-1 is composed of 14 different subunits. Subunits NuoB, C, D, E, F, and G constitute the peripheral sector of the complex. [4Fe-4S] cluster serves as cofactor.

Its subcellular location is the cell membrane. It carries out the reaction a quinone + NADH + 5 H(+)(in) = a quinol + NAD(+) + 4 H(+)(out). Its function is as follows. NDH-1 shuttles electrons from NADH, via FMN and iron-sulfur (Fe-S) centers, to quinones in the respiratory chain. The immediate electron acceptor for the enzyme in this species is believed to be a menaquinone. Couples the redox reaction to proton translocation (for every two electrons transferred, four hydrogen ions are translocated across the cytoplasmic membrane), and thus conserves the redox energy in a proton gradient. This is NADH-quinone oxidoreductase subunit B from Saccharopolyspora erythraea (strain ATCC 11635 / DSM 40517 / JCM 4748 / NBRC 13426 / NCIMB 8594 / NRRL 2338).